The sequence spans 173 residues: Alpha-crystallin A chain (173 aa).

Methionine 1 carries the N-acetylmethionine modification. Residues 1-63 are required for complex formation with BFSP1 and BFSP2; that stretch reads MDIAIQHPWF…RSVLDSGISE (63 aa). Glutamine 6 carries the deamidated glutamine; partial modification. A Phosphoserine modification is found at serine 45. Glutamine 50 bears the Deamidated glutamine; partial mark. Positions 52–162 constitute a sHSP domain; the sequence is LFRSVLDSGI…GHSERAIPVS (111 aa). Position 70 is an N6-acetyllysine (lysine 70). Residue glutamine 90 is modified to Deamidated glutamine; partial. Lysine 99 bears the N6-acetyllysine mark. Residue histidine 100 participates in Zn(2+) binding. The residue at position 101 (asparagine 101) is a Deamidated asparagine; partial. Zn(2+)-binding residues include glutamate 102 and histidine 107. Serine 122 is subject to Phosphoserine. Asparagine 123 is subject to Deamidated asparagine; partial. Residues 144 to 173 are disordered; the sequence is PKVTSGMDAGHSERAIPVSREEKPSSAPSS. The segment covering 153-167 has biased composition (basic and acidic residues); that stretch reads GHSERAIPVSREEKP. Histidine 154 contributes to the Zn(2+) binding site. Serine 162 carries an O-linked (GlcNAc) serine glycan.

The protein belongs to the small heat shock protein (HSP20) family. In terms of assembly, heteromer composed of three CRYAA and one CRYAB subunits. Inter-subunit bridging via zinc ions enhances stability, which is crucial as there is no protein turn over in the lens. Can also form homodimers and homotetramers (dimers of dimers) which serve as the building blocks of homooligomers. Within homooligomers, the zinc-binding motif is created from residues of 3 different molecules. His-100 and Glu-102 from one molecule are ligands of the zinc ion, and His-107 and His-154 residues from additional molecules complete the site with tetrahedral coordination geometry. Part of a complex required for lens intermediate filament formation composed of BFSP1, BFSP2 and CRYAA. Acetylation at Lys-70 may increase chaperone activity. In terms of processing, undergoes age-dependent proteolytical cleavage at the C-terminus.

It is found in the cytoplasm. Its subcellular location is the nucleus. Its function is as follows. Contributes to the transparency and refractive index of the lens. Acts as a chaperone, preventing aggregation of various proteins under a wide range of stress conditions. Required for the correct formation of lens intermediate filaments as part of a complex composed of BFSP1, BFSP2 and CRYAA. This Phocoena phocoena (Harbor porpoise) protein is Alpha-crystallin A chain (CRYAA).